Reading from the N-terminus, the 452-residue chain is Imaginal disk growth factor 6 (452 aa).

Positions 1 to 18 are cleaved as a signal peptide; that stretch reads MIIKALAIVSLCLASIQA. Residues 29–452 form the GH18 domain; sequence KHLVCYYDSA…LRAIKYRLTN (424 aa). A disulfide bridge connects residues C33 and C60. N233 carries N-linked (GlcNAc...) asparagine glycosylation. A disulfide bridge links C352 with C435.

This sequence belongs to the glycosyl hydrolase 18 family. IDGF subfamily. Glycosylated. In larvae, it is expressed in the fat body and by hemocytes.

Its subcellular location is the secreted. Functionally, probably required to stimulate the proliferation, polarization and motility of imaginal disk cells. May act by stabilizing the binding of insulin-like peptides to its receptor through a simultaneous interaction with both molecules to form a multiprotein signaling complex. This is Imaginal disk growth factor 6 from Drosophila melanogaster (Fruit fly).